The primary structure comprises 312 residues: uncharacterized protein (312 aa).

This is an uncharacterized protein from Mycoplasma (Bacteriophage L2).